A 95-amino-acid chain; its full sequence is Ferredoxin-4 (95 aa).

The 2Fe-2S ferredoxin-type domain maps to 2 to 95; sequence DKATLTFTDV…LGGAVKVRPA (94 aa). Residues Cys-38, Cys-43, Cys-46, and Cys-81 each coordinate [2Fe-2S] cluster.

This sequence belongs to the 2Fe2S plant-type ferredoxin family. Requires [2Fe-2S] cluster as cofactor.

In terms of biological role, ferredoxins are iron-sulfur proteins that transfer electrons in a wide variety of metabolic reactions. This ferredoxin is required for nitrogen fixation. The polypeptide is Ferredoxin-4 (fdxC) (Rhodobacter capsulatus (Rhodopseudomonas capsulata)).